Here is a 236-residue protein sequence, read N- to C-terminus: tRNA (guanine-N(7)-)-methyltransferase (236 aa).

S-adenosyl-L-methionine-binding positions include Gly54, 77–78 (EI), 110–111 (NA), and Leu130. Residue Asp133 is part of the active site. Residue 208 to 210 (TEE) participates in S-adenosyl-L-methionine binding.

The protein belongs to the class I-like SAM-binding methyltransferase superfamily. TrmB family.

The protein localises to the nucleus. The enzyme catalyses guanosine(46) in tRNA + S-adenosyl-L-methionine = N(7)-methylguanosine(46) in tRNA + S-adenosyl-L-homocysteine. Its pathway is tRNA modification; N(7)-methylguanine-tRNA biosynthesis. In terms of biological role, catalyzes the formation of N(7)-methylguanine at position 46 (m7G46) in tRNA. The protein is tRNA (guanine-N(7)-)-methyltransferase of Bombyx mori (Silk moth).